Here is a 95-residue protein sequence, read N- to C-terminus: Beta-alanine degradation protein BauB (95 aa).

Residues 23–90 (WRFAPGAETG…NASAHEVVFV (68 aa)) form the Cupin type-2 domain.

Functionally, involved in the degradation of beta-alanine. The chain is Beta-alanine degradation protein BauB (bauB) from Pseudomonas aeruginosa (strain ATCC 15692 / DSM 22644 / CIP 104116 / JCM 14847 / LMG 12228 / 1C / PRS 101 / PAO1).